The sequence spans 627 residues: Meiosis-specific transcription factor NDT80 (627 aa).

Positions 28-335 (EEDTPVILTQ…RSPSNYASSQ (308 aa)) form a DNA-binding region, NDT80. Residues 324–410 (RGRSPSNYAS…MEASKENEDP (87 aa)) form a disordered region. 2 stretches are compositionally biased toward polar residues: residues 327–351 (SPSN…SQNS) and 386–401 (SGAS…STPM).

In terms of assembly, binds to DNA as a monomer. Post-translationally, phosphorylated by pachytene checkpoint kinase IME2, but also phosphorylated in an IME2-independent manner. Phosphorylation probably eliminates SUM1-mediated repression and is also required for full transcriptional activation activity. Phosphorylation of the DNA-binding domain by IME2 does not alter DNA binding affinity.

It localises to the nucleus. In terms of biological role, transcription factor required for successful completion of meiosis and spore formation. Gets activated after completion of meiotic recombination at the end of prophase I. Recognizes and binds to the middle sporulation element (MSE) 5'-C[AG]CAAA[AT]-3' in the promoter region of stage-specific genes that are required for progression through meiosis and sporulation. Competes for binding to MSE with the transcriptional repressor SUM1, which represses middle sporulation-specific genes during mitosis and early sporulation. The polypeptide is Meiosis-specific transcription factor NDT80 (NDT80) (Saccharomyces cerevisiae (strain ATCC 204508 / S288c) (Baker's yeast)).